The sequence spans 131 residues: Small ribosomal subunit protein uS8 (131 aa).

Belongs to the universal ribosomal protein uS8 family. Part of the 30S ribosomal subunit. Contacts proteins S5 and S12.

In terms of biological role, one of the primary rRNA binding proteins, it binds directly to 16S rRNA central domain where it helps coordinate assembly of the platform of the 30S subunit. This Campylobacter lari (strain RM2100 / D67 / ATCC BAA-1060) protein is Small ribosomal subunit protein uS8.